We begin with the raw amino-acid sequence, 710 residues long: DNA topoisomerase 1 (710 aa).

Residues Met-1–Val-22 form a disordered region. Residues Ser-7–Val-22 are compositionally biased toward basic residues. The 111-residue stretch at Lys-26–Ile-136 folds into the Toprim domain. Glu-32 and Asp-105 together coordinate Mg(2+). A Topo IA-type catalytic domain is found at Asp-152 to Leu-574. The segment at Ser-186–Gln-191 is interaction with DNA. The active-site O-(5'-phospho-DNA)-tyrosine intermediate is the Tyr-321. C4-type zinc fingers lie at residues Cys-595–Cys-621 and Cys-635–Cys-663. Residues Cys-676–Cys-702 form a C4-type 3; atypical zinc finger.

Belongs to the type IA topoisomerase family. Monomer. The cofactor is Mg(2+).

It catalyses the reaction ATP-independent breakage of single-stranded DNA, followed by passage and rejoining.. Functionally, releases the supercoiling and torsional tension of DNA, which is introduced during the DNA replication and transcription, by transiently cleaving and rejoining one strand of the DNA duplex. Introduces a single-strand break via transesterification at a target site in duplex DNA. The scissile phosphodiester is attacked by the catalytic tyrosine of the enzyme, resulting in the formation of a DNA-(5'-phosphotyrosyl)-enzyme intermediate and the expulsion of a 3'-OH DNA strand. The free DNA strand then undergoes passage around the unbroken strand, thus removing DNA supercoils. Finally, in the religation step, the DNA 3'-OH attacks the covalent intermediate to expel the active-site tyrosine and restore the DNA phosphodiester backbone. This is DNA topoisomerase 1 from Lactococcus lactis subsp. lactis (strain IL1403) (Streptococcus lactis).